A 954-amino-acid chain; its full sequence is Glycine dehydrogenase (decarboxylating) (954 aa).

N6-(pyridoxal phosphate)lysine is present on K702.

Belongs to the GcvP family. As to quaternary structure, the glycine cleavage system is composed of four proteins: P, T, L and H. The cofactor is pyridoxal 5'-phosphate.

It catalyses the reaction N(6)-[(R)-lipoyl]-L-lysyl-[glycine-cleavage complex H protein] + glycine + H(+) = N(6)-[(R)-S(8)-aminomethyldihydrolipoyl]-L-lysyl-[glycine-cleavage complex H protein] + CO2. Functionally, the glycine cleavage system catalyzes the degradation of glycine. The P protein binds the alpha-amino group of glycine through its pyridoxal phosphate cofactor; CO(2) is released and the remaining methylamine moiety is then transferred to the lipoamide cofactor of the H protein. This chain is Glycine dehydrogenase (decarboxylating), found in Xanthomonas euvesicatoria pv. vesicatoria (strain 85-10) (Xanthomonas campestris pv. vesicatoria).